The sequence spans 948 residues: Zinc finger CCCH domain-containing protein 18 (948 aa).

Met-1 carries the N-acetylmethionine modification. The tract at residues 1–219 is disordered; the sequence is MDVAESPELD…SDRKVRPRPT (219 aa). Ser-6 is modified (phosphoserine). Acidic residues predominate over residues 15-25; the sequence is EDEEQPALSDD. Phosphoserine occurs at positions 33, 45, 58, 64, 71, 75, 80, and 92. Over residues 70-86 the composition is skewed to basic and acidic residues; that stretch reads ASEPKSQDQDSEAHELS. A compositionally biased stretch (acidic residues) spans 95 to 105; that stretch reads EEGDDVEEDGT. Thr-105 carries the phosphothreonine modification. Phosphoserine occurs at positions 106 and 114. Over residues 106-120 the composition is skewed to basic and acidic residues; that stretch reads SDLRDEASSVTRELD. Acidic residues-rich tracts occupy residues 121–132 and 139–154; these read EHELDYDEEVPE and QEEE…EEEK. Ser-169 bears the Phosphoserine mark. The span at 177–186 shows a compositional bias: basic and acidic residues; it reads EAAKEKKKED. The span at 187 to 203 shows a compositional bias: acidic residues; that stretch reads DDGEIDDGEIDDDDLEE. Basic and acidic residues predominate over residues 204-213; that stretch reads GEVKDPSDRK. Residues 215–241 form a C3H1-type zinc finger; it reads RPRPTCRFFMKGNCTWGMSCRFIHPGV. An Omega-N-methylarginine modification is found at Gly-245. 2 disordered regions span residues 272–296 and 388–922; these read ANPW…TESA and YTEA…TLSR. Residues 392 to 480 are compositionally biased toward basic and acidic residues; the sequence is EPYHNYRERE…DREKDKEKPK (89 aa). A coiled-coil region spans residues 395 to 460; it reads HNYRERERER…RERAKRDEKD (66 aa). Ser-483 carries the phosphoserine modification. Lys-506 is covalently cross-linked (Glycyl lysine isopeptide (Lys-Gly) (interchain with G-Cter in SUMO2)). Positions 506–516 are enriched in basic and acidic residues; that stretch reads KRADEWKDPWR. 3 positions are modified to phosphoserine: Ser-528, Ser-530, and Ser-532. Positions 541-602 are enriched in low complexity; that stretch reads SASSASASNS…SRSRSFSSSP (62 aa). A compositionally biased stretch (pro residues) spans 603 to 612; that stretch reads SPSPTPSPHR. Residues Lys-618 and Lys-657 each participate in a glycyl lysine isopeptide (Lys-Gly) (interchain with G-Cter in SUMO2) cross-link. The span at 657–666 shows a compositional bias: basic and acidic residues; that stretch reads KPGDLREARR. Low complexity-rich tracts occupy residues 688-721 and 732-746; these read GSSY…SVHS and ASPV…PTPA. Residues 756–770 show a composition bias toward basic and acidic residues; that stretch reads KKEDGVREEKRRRDP. Residues 774–804 show a composition bias toward low complexity; the sequence is PPKSSKAPAGGKASQQAAAPQPAVPGQPQQG. Lys-810 is subject to N6-acetyllysine. Residue Lys-813 forms a Glycyl lysine isopeptide (Lys-Gly) (interchain with G-Cter in SUMO2) linkage. The span at 820–837 shows a compositional bias: basic and acidic residues; sequence AADKGSRKRYEPSDKDRQ. Residues Ser-838, Ser-847, Ser-863, Ser-888, and Ser-891 each carry the phosphoserine modification. Over residues 888–898 the composition is skewed to polar residues; sequence SPQSKGSSKVT. The segment covering 902 to 919 has biased composition (low complexity); sequence GKATDTATAGTKSGKAST. A Glycyl lysine isopeptide (Lys-Gly) (interchain with G-Cter in SUMO2) cross-link involves residue Lys-903. A coiled-coil region spans residues 916–945; that stretch reads KASTLSRREELLKQLKAVEDAIARKRAKIP.

As to quaternary structure, interacts with ZFC3H1 in a RNase-insensitive manner.

Its subcellular location is the nucleus. The polypeptide is Zinc finger CCCH domain-containing protein 18 (Zc3h18) (Mus musculus (Mouse)).